Consider the following 244-residue polypeptide: Large ribosomal subunit protein uL2 (244 aa).

The span at 1 to 12 (MGKRILVQRRGR) shows a compositional bias: basic residues. 2 disordered regions span residues 1-26 (MGKR…KRDG) and 193-225 (AMSP…KVGF).

This sequence belongs to the universal ribosomal protein uL2 family. Part of the 50S ribosomal subunit. Forms a bridge to the 30S subunit in the 70S ribosome.

In terms of biological role, one of the primary rRNA binding proteins. Required for association of the 30S and 50S subunits to form the 70S ribosome, for tRNA binding and peptide bond formation. It has been suggested to have peptidyltransferase activity; this is somewhat controversial. Makes several contacts with the 16S rRNA in the 70S ribosome. The polypeptide is Large ribosomal subunit protein uL2 (Pyrobaculum calidifontis (strain DSM 21063 / JCM 11548 / VA1)).